Consider the following 943-residue polypeptide: Neutral alpha-glucosidase AB (943 aa).

The first 23 residues, 1–23, serve as a signal peptide directing secretion; the sequence is MRKLVILIILSIVCSLFIGSIES. The segment at 186-231 is disordered; the sequence is FEPISDKPQPLPPKEKKSEEENKEANQEEDNNNNNNDNNEEQQVST. The segment covering 198–211 has biased composition (basic and acidic residues); the sequence is PKEKKSEEENKEAN. Catalysis depends on Asp-540, which acts as the Nucleophile. The active site involves Glu-543. Residue Asp-617 is the Proton donor of the active site. N-linked (GlcNAc...) asparagine glycans are attached at residues Asn-878, Asn-887, and Asn-907.

The protein belongs to the glycosyl hydrolase 31 family.

The protein localises to the endoplasmic reticulum. It localises to the golgi apparatus. The catalysed reaction is N(4)-(alpha-D-Glc-(1-&gt;3)-alpha-D-Man-(1-&gt;2)-alpha-D-Man-(1-&gt;2)-alpha-D-Man-(1-&gt;3)-[alpha-D-Man-(1-&gt;2)-alpha-D-Man-(1-&gt;3)-[alpha-D-Man-(1-&gt;2)-alpha-D-Man-(1-&gt;6)]-alpha-D-Man-(1-&gt;6)]-beta-D-Man-(1-&gt;4)-beta-D-GlcNAc-(1-&gt;4)-beta-D-GlcNAc)-L-asparaginyl-[protein] + H2O = N(4)-(alpha-D-Man-(1-&gt;2)-alpha-D-Man-(1-&gt;2)-alpha-D-Man-(1-&gt;3)-[alpha-D-Man-(1-&gt;2)-alpha-D-Man-(1-&gt;3)-[alpha-D-Man-(1-&gt;2)-alpha-D-Man-(1-&gt;6)]-alpha-D-Man-(1-&gt;6)]-beta-D-Man-(1-&gt;4)-beta-D-GlcNAc-(1-&gt;4)-beta-D-GlcNAc)-L-asparaginyl-[protein] (N-glucan mannose isomer 9A1,2,3B1,2,3) + beta-D-glucose. The enzyme catalyses N(4)-(alpha-D-Glc-(1-&gt;3)-alpha-D-Glc-(1-&gt;3)-alpha-D-Man-(1-&gt;2)-alpha-D-Man-(1-&gt;2)-alpha-D-Man-(1-&gt;3)-[alpha-D-Man-(1-&gt;2)-alpha-D-Man-(1-&gt;3)-[alpha-D-Man-(1-&gt;2)-alpha-D-Man-(1-&gt;6)]-alpha-D-Man-(1-&gt;6)]-beta-D-Man-(1-&gt;4)-beta-D-GlcNAc-(1-&gt;4)-beta-D-GlcNAc)-L-asparaginyl-[protein] + H2O = N(4)-(alpha-D-Glc-(1-&gt;3)-alpha-D-Man-(1-&gt;2)-alpha-D-Man-(1-&gt;2)-alpha-D-Man-(1-&gt;3)-[alpha-D-Man-(1-&gt;2)-alpha-D-Man-(1-&gt;3)-[alpha-D-Man-(1-&gt;2)-alpha-D-Man-(1-&gt;6)]-alpha-D-Man-(1-&gt;6)]-beta-D-Man-(1-&gt;4)-beta-D-GlcNAc-(1-&gt;4)-beta-D-GlcNAc)-L-asparaginyl-[protein] + beta-D-glucose. It functions in the pathway glycan metabolism; N-glycan metabolism. Functionally, cleaves sequentially the 2 innermost alpha-1,3-linked glucose residues from N-linked oligosaccharides on newly synthesized glycoproteins. This is Neutral alpha-glucosidase AB (modA) from Dictyostelium discoideum (Social amoeba).